The primary structure comprises 217 residues: Thiamine-phosphate synthase (217 aa).

Residues 42–46 and Asp77 contribute to the 4-amino-2-methyl-5-(diphosphooxymethyl)pyrimidine site; that span reads QFRDK. Mg(2+)-binding residues include Asp78 and Asp97. Ser117 is a binding site for 4-amino-2-methyl-5-(diphosphooxymethyl)pyrimidine. 144 to 146 lines the 2-[(2R,5Z)-2-carboxy-4-methylthiazol-5(2H)-ylidene]ethyl phosphate pocket; it reads TIS. Lys147 lines the 4-amino-2-methyl-5-(diphosphooxymethyl)pyrimidine pocket. 2-[(2R,5Z)-2-carboxy-4-methylthiazol-5(2H)-ylidene]ethyl phosphate-binding positions include Gly175 and 195-196; that span reads IT.

This sequence belongs to the thiamine-phosphate synthase family. Mg(2+) is required as a cofactor.

The catalysed reaction is 2-[(2R,5Z)-2-carboxy-4-methylthiazol-5(2H)-ylidene]ethyl phosphate + 4-amino-2-methyl-5-(diphosphooxymethyl)pyrimidine + 2 H(+) = thiamine phosphate + CO2 + diphosphate. It carries out the reaction 2-(2-carboxy-4-methylthiazol-5-yl)ethyl phosphate + 4-amino-2-methyl-5-(diphosphooxymethyl)pyrimidine + 2 H(+) = thiamine phosphate + CO2 + diphosphate. It catalyses the reaction 4-methyl-5-(2-phosphooxyethyl)-thiazole + 4-amino-2-methyl-5-(diphosphooxymethyl)pyrimidine + H(+) = thiamine phosphate + diphosphate. It functions in the pathway cofactor biosynthesis; thiamine diphosphate biosynthesis; thiamine phosphate from 4-amino-2-methyl-5-diphosphomethylpyrimidine and 4-methyl-5-(2-phosphoethyl)-thiazole: step 1/1. Its function is as follows. Condenses 4-methyl-5-(beta-hydroxyethyl)thiazole monophosphate (THZ-P) and 2-methyl-4-amino-5-hydroxymethyl pyrimidine pyrophosphate (HMP-PP) to form thiamine monophosphate (TMP). The chain is Thiamine-phosphate synthase from Levilactobacillus brevis (strain ATCC 367 / BCRC 12310 / CIP 105137 / JCM 1170 / LMG 11437 / NCIMB 947 / NCTC 947) (Lactobacillus brevis).